The sequence spans 214 residues: ATP phosphoribosyltransferase (214 aa).

Belongs to the ATP phosphoribosyltransferase family. Short subfamily. As to quaternary structure, heteromultimer composed of HisG and HisZ subunits.

It localises to the cytoplasm. It catalyses the reaction 1-(5-phospho-beta-D-ribosyl)-ATP + diphosphate = 5-phospho-alpha-D-ribose 1-diphosphate + ATP. It participates in amino-acid biosynthesis; L-histidine biosynthesis; L-histidine from 5-phospho-alpha-D-ribose 1-diphosphate: step 1/9. Catalyzes the condensation of ATP and 5-phosphoribose 1-diphosphate to form N'-(5'-phosphoribosyl)-ATP (PR-ATP). Has a crucial role in the pathway because the rate of histidine biosynthesis seems to be controlled primarily by regulation of HisG enzymatic activity. This Marinomonas sp. (strain MWYL1) protein is ATP phosphoribosyltransferase.